A 459-amino-acid chain; its full sequence is Transcription factor AP-2-beta (459 aa).

A Glycyl lysine isopeptide (Lys-Gly) (interchain with G-Cter in SUMO) cross-link involves residue Lys21. Residues His30–Arg139 form a disordered region. Residues Ser35–Tyr51 are compositionally biased toward polar residues. The span at Leu121 to Leu132 shows a compositional bias: low complexity. Residue Ser258 is modified to Phosphoserine; by PKA. The segment at Arg299–Asp429 is H-S-H (helix-span-helix), dimerization. The interval Asn435 to Lys459 is disordered. Residues Thr450–Lys459 show a composition bias toward basic and acidic residues.

Belongs to the AP-2 family. As to quaternary structure, binds DNA as a dimer. Can form homodimers or heterodimers with other AP-2 family members. Interacts with CITED4. Interacts with UBE2I. Interacts with KCTD1; this interaction represses transcription activation. Interacts with CITED2 (via C-terminus); the interaction stimulates TFAP2B-transcriptional activity. In terms of processing, sumoylated. Sumoylated on Lys-21; which inhibits transcriptional activity. Localizes to neurons in areas of the cerebral cortex, cerebellum and hypothalamus (at protein level).

The protein localises to the nucleus. Its function is as follows. Sequence-specific DNA-binding protein that interacts with inducible viral and cellular enhancer elements to regulate transcription of selected genes. AP-2 factors bind to the consensus sequence 5'-GCCNNNGGC-3' and activate genes involved in a large spectrum of important biological functions including proper eye, face, body wall, limb and neural tube development. They also suppress a number of genes including MCAM/MUC18, C/EBP alpha and MYC. AP-2-beta appears to be required for normal face and limb development and for proper terminal differentiation and function of renal tubular epithelia. This Mus musculus (Mouse) protein is Transcription factor AP-2-beta (Tfap2b).